We begin with the raw amino-acid sequence, 185 residues long: Urease accessory protein UreE (185 aa).

A disordered region spans residues Leu-153–His-185. The span at Gly-162 to His-175 shows a compositional bias: basic residues. Residues His-176–His-185 are compositionally biased toward basic and acidic residues.

It belongs to the UreE family.

It localises to the cytoplasm. Its function is as follows. Involved in urease metallocenter assembly. Binds nickel. Probably functions as a nickel donor during metallocenter assembly. The polypeptide is Urease accessory protein UreE (Haemophilus influenzae (strain PittGG)).